The sequence spans 218 residues: Adenylate kinase (218 aa).

10-15 serves as a coordination point for ATP; that stretch reads GAGKGT. The tract at residues 30 to 59 is NMP; that stretch reads STGDMLRAAVKEGSELGLKVKEIMNSGGLV. AMP is bound by residues T31, R36, 57–59, 85–88, and Q92; these read GLV and GFPR. Residues 122-159 form an LID region; sequence GRRVHPGSGRVYHVDYNPPKEEGKDDVTGEALIQRDDD. Residues R123 and 132 to 133 contribute to the ATP site; that span reads VY. AMP is bound by residues R156 and R167. G203 lines the ATP pocket.

Belongs to the adenylate kinase family. Monomer.

The protein resides in the cytoplasm. It carries out the reaction AMP + ATP = 2 ADP. It functions in the pathway purine metabolism; AMP biosynthesis via salvage pathway; AMP from ADP: step 1/1. Its function is as follows. Catalyzes the reversible transfer of the terminal phosphate group between ATP and AMP. Plays an important role in cellular energy homeostasis and in adenine nucleotide metabolism. This is Adenylate kinase from Chromohalobacter salexigens (strain ATCC BAA-138 / DSM 3043 / CIP 106854 / NCIMB 13768 / 1H11).